Reading from the N-terminus, the 396-residue chain is Probable porphobilinogen deaminase (396 aa).

The segment at 159–224 (APALHREHER…DTASSSEFEQ (66 aa)) is disordered. The interval 159 to 245 (APALHREHER…LQQSAMERDP (87 aa)) is insert. Basic and acidic residues predominate over residues 162 to 189 (LHREHERRTEAEKEAQSRDAREQRRGDY). Acidic residues predominate over residues 200–215 (LDTEDGEEGAADDGDD). Cysteine 328 is subject to S-(dipyrrolylmethanemethyl)cysteine.

Belongs to the HMBS family. It depends on dipyrromethane as a cofactor.

The catalysed reaction is 4 porphobilinogen + H2O = hydroxymethylbilane + 4 NH4(+). Its pathway is porphyrin-containing compound metabolism; protoporphyrin-IX biosynthesis; coproporphyrinogen-III from 5-aminolevulinate: step 2/4. In terms of biological role, tetrapolymerization of the monopyrrole PBG into the hydroxymethylbilane pre-uroporphyrinogen in several discrete steps. The sequence is that of Probable porphobilinogen deaminase (hemC) from Halobacterium salinarum (strain ATCC 700922 / JCM 11081 / NRC-1) (Halobacterium halobium).